A 96-amino-acid chain; its full sequence is Neurotoxin beta-KTx 31.1 (96 aa).

Residues 1–21 (MQAKRTILLLLLLGMVALSSC) form the signal peptide. A propeptide spanning residues 22–29 (GLREKHVQ) is cleaved from the precursor. Positions 56-93 (QYGCPIIKDYCSFHCNDLEKHEGYCHGTKCKCNIPNQY) constitute a BetaSPN-type CS-alpha/beta domain. 3 disulfide bridges follow: Cys-59/Cys-80, Cys-66/Cys-85, and Cys-70/Cys-87.

This sequence belongs to the long chain scorpion toxin family. Class 1 subfamily. In terms of tissue distribution, expressed by the venom gland.

It localises to the secreted. Functionally, inhibits voltage-gated potassium channel. In Lychas mucronatus (Chinese swimming scorpion), this protein is Neurotoxin beta-KTx 31.1.